Consider the following 1792-residue polypeptide: E3 ubiquitin-protein ligase RBBP6 (1792 aa).

Positions 4-76 constitute a DWNN domain; that stretch reads VHYKFSSKLN…NSSVIVRRIP (73 aa). Lys-130 is subject to N6-acetyllysine. Residues 159–176 form a CCHC-type zinc finger; it reads YTCFRCGKPGHYIKNCPT. A phosphoserine mark is found at Ser-244, Ser-245, Ser-246, and Ser-247. The RING-type; degenerate zinc-finger motif lies at 259–300; the sequence is CLICKDIMTDAVVIPCCGNSYCDECIRTALLESDEHTCPTCH. Positions 326–347 are disordered; it reads TGYTKRLRKQLPPPPPPIPPPR. Over residues 336 to 347 the composition is skewed to pro residues; the sequence is LPPPPPPIPPPR. Residue Ser-360 is modified to Phosphoserine. Residues 371-410 are disordered; that stretch reads IPVTSSSTHPAPSISSLTSNQSSLAPPVSGNPSSAPAPVP. The span at 374-393 shows a compositional bias: low complexity; sequence TSSSTHPAPSISSLTSNQSS. Position 516 is a phosphoserine (Ser-516). Disordered stretches follow at residues 532–601, 621–640, and 645–799; these read INRG…SVPP, QTAHSNTIPTTQAPPLSREE, and QRRL…FNRY. Residues 549–571 form a (Microbial infection) Interaction with Ebolavirus VP30 region; sequence SLPATPVFVPVPPPPLYPPPPHT. A compositionally biased stretch (pro residues) spans 557-601; that stretch reads VPVPPPPLYPPPPHTLPLPPGVPPPQFSPQFPPGQPPPAGYSVPP. The short motif at 560-565 is the PPxPxY element; that stretch reads PPPPLY. Residues 621 to 634 show a composition bias toward polar residues; that stretch reads QTAHSNTIPTTQAP. Positions 645-675 are enriched in basic and acidic residues; it reads QRRLKEEEKKKSKLDEFTNDFAKELMEYKKI. A compositionally biased stretch (low complexity) spans 685 to 719; the sequence is RSKSPYSGSSYSRSSYTYSKSRSGSTRSRSYSRSF. The span at 735 to 770 shows a compositional bias: basic residues; sequence RRGRGKSRNYRSRSRSHGYHRSRSRSPPYRRYHSRS. 4 positions are modified to phosphoserine: Ser-768, Ser-770, Ser-772, and Ser-780. Positions 790–799 are enriched in basic and acidic residues; it reads ETEREYFNRY. Ser-815, Ser-861, and Ser-873 each carry phosphoserine. 4 disordered regions span residues 847-1290, 1321-1348, 1360-1665, and 1682-1792; these read AGAQ…DTKR, WDKDDFESEEEDVKSTQPISSVGKPASV, VKYP…SKDL, and VVQV…SVTV. Positions 902-922 are enriched in basic and acidic residues; that stretch reads LSARDGHNQKDNTKSKEKESE. Residues 931 to 940 are compositionally biased toward basic residues; that stretch reads NKHKKHRKRR. 5 stretches are compositionally biased toward basic and acidic residues: residues 955–971, 979–990, 1001–1017, 1041–1071, and 1095–1161; these read ETSRKSREPTGVEENKT, SRDDATPVRDEP, VSEKDKRERDKPKAKGD, PQEKVDGERERSPRSEPPIKKAKEETPKTDN, and SAKE…KDFE. The residue at position 957 (Ser-957) is a Phosphoserine. The interval 982–1139 is interaction with RB1; that stretch reads DATPVRDEPM…AKKPNEKNKP (158 aa). Thr-984 bears the Phosphothreonine mark. Glycyl lysine isopeptide (Lys-Gly) (interchain with G-Cter in SUMO2) cross-links involve residues Lys-1106 and Lys-1169. Ser-1179 bears the Phosphoserine mark. The span at 1182-1200 shows a compositional bias: basic and acidic residues; it reads RKMEPDTEKMDRTPEKDKI. Position 1221 is a phosphoserine (Ser-1221). A compositionally biased stretch (basic and acidic residues) spans 1230-1248; that stretch reads EPSEKLESTSSKVKQEKVK. The span at 1258–1276 shows a compositional bias: polar residues; sequence TEGSSSTLVDYTSTSSTGG. Thr-1271 bears the Phosphothreonine mark. Ser-1277 bears the Phosphoserine mark. Positions 1280–1290 are enriched in basic and acidic residues; the sequence is RKSEEKTDTKR. Phosphoserine occurs at positions 1328, 1341, and 1347. Composition is skewed to basic and acidic residues over residues 1362–1391 and 1399–1435; these read YPEKESEPSEKIQKFTKDVSHEIIQHEVKS and EKGKTKDRDYSVLEKENPEKRKNSTQPEKESNLDRLN. An interaction with p53 region spans residues 1433-1544; the sequence is RLNEQGNFKS…SPSRDRKPHD (112 aa). Over residues 1436–1447 the composition is skewed to polar residues; it reads EQGNFKSLSQSS. 3 stretches are compositionally biased toward basic and acidic residues: residues 1448 to 1459, 1468 to 1506, and 1514 to 1580; these read KEARTSDKHDST, TPNRDKKTDYDTREYSSSKRRDEKNELTRRKDSPSRNKD, and KPRE…RNNK. The residue at position 1468 (Thr-1468) is a Phosphothreonine. A compositionally biased stretch (polar residues) spans 1618-1627; the sequence is LSHSSRLSSD. Positions 1634-1646 are enriched in acidic residues; sequence EAAFEPDYNESDS. 3 positions are modified to phosphoserine: Ser-1646, Ser-1648, and Ser-1651. Residues 1692–1723 show a composition bias toward low complexity; it reads SHSSPSVSPSRSHSPSGSQTRSHSSSASSAES. The segment covering 1727-1750 has biased composition (basic residues); sequence KKKKKKKEKKKHKKHKKHKKHKKH. Positions 1751–1760 are enriched in basic and acidic residues; it reads AGTEVELEKS. A compositionally biased stretch (basic residues) spans 1761–1773; sequence QKHKHKKKKSKKN. Basic and acidic residues predominate over residues 1774–1792; the sequence is KDKEKEKEKDDQKVKSVTV.

In terms of assembly, interacts with p53/TP53 and RB1. Interacts also with MDM2 and YBX1. Interacts with NEK6. Interacts with ZBTB38. As to quaternary structure, (Microbial infection) [Isoform 1]: Interacts with ebolavirus VP30. In terms of processing, phosphorylated by NEK6. Highly expressed in the placenta and testis. Expressed at lower levels in the brain, heart, kidney, liver and lung. Overexpressed in esophageal cancer.

The protein resides in the nucleus. The protein localises to the nucleolus. Its subcellular location is the chromosome. It localises to the cytoplasm. It is found in the cytoskeleton. The protein resides in the microtubule organizing center. The protein localises to the centrosome. It catalyses the reaction S-ubiquitinyl-[E2 ubiquitin-conjugating enzyme]-L-cysteine + [acceptor protein]-L-lysine = [E2 ubiquitin-conjugating enzyme]-L-cysteine + N(6)-ubiquitinyl-[acceptor protein]-L-lysine.. It functions in the pathway protein modification; protein ubiquitination. Functionally, E3 ubiquitin-protein ligase which promotes ubiquitination of YBX1, leading to its degradation by the proteasome. May play a role as a scaffold protein to promote the assembly of the p53/TP53-MDM2 complex, resulting in increase of MDM2-mediated ubiquitination and degradation of p53/TP53; may function as negative regulator of p53/TP53, leading to both apoptosis and cell growth. Regulates DNA-replication and the stability of chromosomal common fragile sites (CFSs) in a ZBTB38- and MCM10-dependent manner. Controls ZBTB38 protein stability and abundance via ubiquitination and proteasomal degradation, and ZBTB38 in turn negatively regulates the expression of MCM10 which plays an important role in DNA-replication. Its function is as follows. (Microbial infection) [Isoform 1]: Restricts ebolavirus replication probably by impairing the vp30-NP interaction, and thus viral transcription. In Homo sapiens (Human), this protein is E3 ubiquitin-protein ligase RBBP6 (RBBP6).